The chain runs to 156 residues: Small ribosomal subunit protein uS7 (156 aa).

The protein belongs to the universal ribosomal protein uS7 family. In terms of assembly, part of the 30S ribosomal subunit. Contacts proteins S9 and S11.

One of the primary rRNA binding proteins, it binds directly to 16S rRNA where it nucleates assembly of the head domain of the 30S subunit. Is located at the subunit interface close to the decoding center, probably blocks exit of the E-site tRNA. This is Small ribosomal subunit protein uS7 from Crocosphaera subtropica (strain ATCC 51142 / BH68) (Cyanothece sp. (strain ATCC 51142)).